The following is a 362-amino-acid chain: sn-glycerol-3-phosphate import ATP-binding protein UgpC (362 aa).

Residues 4 to 235 enclose the ABC transporter domain; it reads LSFRNVKKTY…PASTFVAGFI (232 aa). 37–44 serves as a coordination point for ATP; that stretch reads GPSGCGKS.

Belongs to the ABC transporter superfamily. sn-glycerol-3-phosphate importer (TC 3.A.1.1.3) family. As to quaternary structure, the complex is composed of two ATP-binding proteins (UgpC), two transmembrane proteins (UgpA and UgpE) and a solute-binding protein (UgpB).

The protein localises to the cell inner membrane. The enzyme catalyses sn-glycerol 3-phosphate(out) + ATP + H2O = sn-glycerol 3-phosphate(in) + ADP + phosphate + H(+). In terms of biological role, part of the ABC transporter complex UgpBAEC involved in sn-glycerol-3-phosphate (G3P) import. Responsible for energy coupling to the transport system. In Bordetella bronchiseptica (strain ATCC BAA-588 / NCTC 13252 / RB50) (Alcaligenes bronchisepticus), this protein is sn-glycerol-3-phosphate import ATP-binding protein UgpC.